The sequence spans 460 residues: Malonyl-coenzyme A:anthocyanin 3-O-glucoside-6''-O-malonyltransferase (460 aa).

Active-site proton acceptor residues include H173 and D400.

The protein belongs to the plant acyltransferase family.

The catalysed reaction is an anthocyanidin 3-O-beta-D-glucoside + malonyl-CoA = an anthocyanidin 3-O-(6-O-malonyl-beta-D-glucoside) + CoA. With respect to regulation, completely inhibited by 5 mM N-ethylmaleimide or 0.1 mM Cu(2+). Partially inhibited by 0.1 mM Fe(2+) or 0.1 mM Hg(2+). Catalyzes the transfer of the malonyl group from malonyl-CoA to pelargonidin 3-O-glucoside to produce pelargonidin 3-O-6''-O-malonylglucoside. Can also transfer the malonyl group from malonyl-CoA to cyanidin 3-O-glucoside, delphinidin 3-O-glucoside and quercetin 3-O-glucoside. In Dahlia pinnata (Pinnate dahlia), this protein is Malonyl-coenzyme A:anthocyanin 3-O-glucoside-6''-O-malonyltransferase.